Consider the following 675-residue polypeptide: UvrABC system protein B (675 aa).

The region spanning 32 to 417 is the Helicase ATP-binding domain; that stretch reads EGLSDGLAYQ…EHAGQVVEQV (386 aa). 45–52 lines the ATP pocket; sequence GVTGSGKT. Residues 98 to 121 carry the Beta-hairpin motif; the sequence is YYDYYQPEAYVPSRDLFIEKDSAI. The Helicase C-terminal domain maps to 436 to 602; sequence QVDDLMSEIN…QIKKQVKDII (167 aa). The UVR domain occupies 634–669; that stretch reads IKEIAKLEKAMQQAARDLQFEEAAVLRDRISNIKEN.

It belongs to the UvrB family. Forms a heterotetramer with UvrA during the search for lesions. Interacts with UvrC in an incision complex.

The protein localises to the cytoplasm. Its function is as follows. The UvrABC repair system catalyzes the recognition and processing of DNA lesions. A damage recognition complex composed of 2 UvrA and 2 UvrB subunits scans DNA for abnormalities. Upon binding of the UvrA(2)B(2) complex to a putative damaged site, the DNA wraps around one UvrB monomer. DNA wrap is dependent on ATP binding by UvrB and probably causes local melting of the DNA helix, facilitating insertion of UvrB beta-hairpin between the DNA strands. Then UvrB probes one DNA strand for the presence of a lesion. If a lesion is found the UvrA subunits dissociate and the UvrB-DNA preincision complex is formed. This complex is subsequently bound by UvrC and the second UvrB is released. If no lesion is found, the DNA wraps around the other UvrB subunit that will check the other stand for damage. This is UvrABC system protein B from Neisseria gonorrhoeae (strain ATCC 700825 / FA 1090).